Reading from the N-terminus, the 410-residue chain is Putative competence-damage inducible protein (410 aa).

This sequence belongs to the CinA family.

The protein is Putative competence-damage inducible protein of Clostridium beijerinckii (strain ATCC 51743 / NCIMB 8052) (Clostridium acetobutylicum).